We begin with the raw amino-acid sequence, 126 residues long: uncharacterized protein (126 aa).

The disordered stretch occupies residues 83–126; the sequence is VPPPLDRSHESPEEFFPPQNRNRGGGPKAQIQRHPPEALEKTTH. The span at 116–126 shows a compositional bias: basic and acidic residues; it reads HPPEALEKTTH.

This is an uncharacterized protein from Galliformes (FAdV-1).